Reading from the N-terminus, the 156-residue chain is MHQYHKLQVEAIYCGTVIDHIPAQVGIKLLSWFKLTATDERITIGLNLPSNKQGKKDLIKIENVLLTEEQANQLAIYAPYATVNRIANYNVVCKRTLTLPESIANVFICPNSNCVSRSEPVASGFIIKTRGKQIHLKCKYCEKVFERRAVESSNLK.

The Zn(2+) site is built by cysteine 109, cysteine 114, cysteine 138, and cysteine 141.

The protein belongs to the PyrI family. In terms of assembly, contains catalytic and regulatory chains. Zn(2+) serves as cofactor.

In terms of biological role, involved in allosteric regulation of aspartate carbamoyltransferase. The polypeptide is Aspartate carbamoyltransferase regulatory chain (Baumannia cicadellinicola subsp. Homalodisca coagulata).